Consider the following 272-residue polypeptide: uncharacterized protein (272 aa).

Residue Lys185 is the Schiff-base intermediate with substrate of the active site.

This sequence belongs to the DeoC/FbaB aldolase family.

This is an uncharacterized protein from Saccharolobus solfataricus (strain ATCC 35092 / DSM 1617 / JCM 11322 / P2) (Sulfolobus solfataricus).